The chain runs to 283 residues: MKILDGKAVSLKVKESVKVRADELKKFGVEPTLAVVLVGEDKASQTYVRAKEKACNEYGIKSVAHRLSENTTQNELLALINVLNLDDSIHGILVQLPLPKHIDTNVVLAAIDPRKDVDGFHAVNVGKLVSGLDGFVPCTPLGVMEILKEYGIEVAGLNAVVIGRSNIVGKPMANLLLNASATVTVTHSKTKNLKEICKNADLIVAAIGKPFFLKADMVKDGAVVVDVGINRLDDGRLVGDVDFDEVAPKCSYITPVPGGVGPMTIAMLLNNTILAAQAKIAKN.

NADP(+) contacts are provided by residues 163–165 (GRS), Ser-188, and Ile-229.

This sequence belongs to the tetrahydrofolate dehydrogenase/cyclohydrolase family. In terms of assembly, homodimer.

It catalyses the reaction (6R)-5,10-methylene-5,6,7,8-tetrahydrofolate + NADP(+) = (6R)-5,10-methenyltetrahydrofolate + NADPH. It carries out the reaction (6R)-5,10-methenyltetrahydrofolate + H2O = (6R)-10-formyltetrahydrofolate + H(+). Its pathway is one-carbon metabolism; tetrahydrofolate interconversion. Its function is as follows. Catalyzes the oxidation of 5,10-methylenetetrahydrofolate to 5,10-methenyltetrahydrofolate and then the hydrolysis of 5,10-methenyltetrahydrofolate to 10-formyltetrahydrofolate. The chain is Bifunctional protein FolD from Campylobacter concisus (strain 13826).